Consider the following 276-residue polypeptide: Hydroxyethylthiazole kinase (276 aa).

ATP is bound by residues Arg-126 and Ser-172. Gly-199 provides a ligand contact to substrate.

It belongs to the Thz kinase family. Mg(2+) serves as cofactor.

It carries out the reaction 5-(2-hydroxyethyl)-4-methylthiazole + ATP = 4-methyl-5-(2-phosphooxyethyl)-thiazole + ADP + H(+). Its pathway is cofactor biosynthesis; thiamine diphosphate biosynthesis; 4-methyl-5-(2-phosphoethyl)-thiazole from 5-(2-hydroxyethyl)-4-methylthiazole: step 1/1. Catalyzes the phosphorylation of the hydroxyl group of 4-methyl-5-beta-hydroxyethylthiazole (THZ). The polypeptide is Hydroxyethylthiazole kinase (Burkholderia pseudomallei (strain 1106a)).